A 633-amino-acid chain; its full sequence is Acetylcholinesterase (633 aa).

The first 23 residues, M1–A23, serve as a signal peptide directing secretion. C91 and C118 form a disulfide bridge. N133 and N184 each carry an N-linked (GlcNAc...) asparagine glycan. The active-site Acyl-ester intermediate is the S225. C279 and C290 are oxidised to a cystine. Residue N283 is glycosylated (N-linked (GlcNAc...) asparagine). The active-site Charge relay system is E352. An N-linked (GlcNAc...) asparagine glycan is attached at N368. C427 and C579 are oxidised to a cystine. Catalysis depends on H494, which acts as the Charge relay system. Residues N511 and N591 are each glycosylated (N-linked (GlcNAc...) asparagine).

It belongs to the type-B carboxylesterase/lipase family.

It is found in the synapse. The protein resides in the secreted. The protein localises to the cell membrane. It catalyses the reaction acetylcholine + H2O = choline + acetate + H(+). Terminates signal transduction at the neuromuscular junction by rapid hydrolysis of the acetylcholine released into the synaptic cleft. This Electrophorus electricus (Electric eel) protein is Acetylcholinesterase (ache).